Reading from the N-terminus, the 294-residue chain is Beta-lactamase (294 aa).

An N-terminal signal peptide occupies residues methionine 1–alanine 30. The active-site Acyl-ester intermediate is the serine 75. Position 239 to 241 (lysine 239 to glycine 241) interacts with substrate.

Belongs to the class-A beta-lactamase family.

The catalysed reaction is a beta-lactam + H2O = a substituted beta-amino acid. The polypeptide is Beta-lactamase (blaA) (Yersinia enterocolitica).